A 428-amino-acid polypeptide reads, in one-letter code: Protein clpf-1 (428 aa).

Positions 16 and 56 each coordinate ATP. Positions 99–118 are disordered; that stretch reads KKREEQAVSNSSKPKGPRLL. 124-129 contributes to the ATP binding site; it reads DVGKTT.

Belongs to the Clp1 family. Clp1 subfamily.

The protein resides in the nucleus. In terms of biological role, required for endonucleolytic cleavage during polyadenylation-dependent pre-mRNA 3'-end formation. The protein is Protein clpf-1 of Caenorhabditis briggsae.